An 887-amino-acid chain; its full sequence is Integrator complex subunit 6 (887 aa).

Residues Ile3–Val227 enclose the VWFA domain. Positions Met626 to Glu633 match the Inhibitory loop motif. A Phosphoserine modification is found at Ser804.

This sequence belongs to the Integrator subunit 6 family. In terms of assembly, component of the Integrator complex, composed of core subunits INTS1, INTS2, INTS3, INTS4, INTS5, INTS6, INTS7, INTS8, INTS9/RC74, INTS10, INTS11/CPSF3L, INTS12, INTS13, INTS14 and INTS15. The core complex associates with protein phosphatase 2A subunits PPP2CA and PPP2R1A, to form the Integrator-PP2A (INTAC) complex. Widely expressed. Expressed in heart, brain, placenta, lung, liver, skeletal muscle, kidney and pancreas.

It localises to the nucleus. It is found in the chromosome. Functionally, component of the integrator complex, a multiprotein complex that terminates RNA polymerase II (Pol II) transcription in the promoter-proximal region of genes. The integrator complex provides a quality checkpoint during transcription elongation by driving premature transcription termination of transcripts that are unfavorably configured for transcriptional elongation: the complex terminates transcription by (1) catalyzing dephosphorylation of the C-terminal domain (CTD) of Pol II subunit POLR2A and SUPT5H/SPT5, (2) degrading the exiting nascent RNA transcript via endonuclease activity and (3) promoting the release of Pol II from bound DNA. The integrator complex is also involved in terminating the synthesis of non-coding Pol II transcripts, such as enhancer RNAs (eRNAs), small nuclear RNAs (snRNAs), telomerase RNAs and long non-coding RNAs (lncRNAs). Within the integrator complex, INTS6 acts as a molecular adapter that promotes assembly of protein phosphatase 2A (PP2A) subunits to the integrator core complex, promoting recruitment of PP2A to transcription pause-release checkpoint. Mediates recruitment of cytoplasmic dynein to the nuclear envelope, probably as component of the integrator complex. May have a tumor suppressor role; an ectopic expression suppressing tumor cell growth. This is Integrator complex subunit 6 from Homo sapiens (Human).